We begin with the raw amino-acid sequence, 1097 residues long: Mitochondrial distribution and morphology protein 34 (1097 aa).

An SMP-LTD domain is found at 1 to 198 (MSFNFKWPTF…LPGIIHRLSQ (198 aa)). 8 disordered regions span residues 204 to 305 (EAKS…PLHS), 317 to 343 (AAFP…SGFS), 390 to 427 (QSDD…LDAV), 480 to 520 (DDQP…TSSL), 556 to 600 (PEVD…SSRT), 645 to 675 (LDAE…RDLS), 716 to 817 (GQNA…SPGV), and 923 to 1097 (GSSA…AIRE). Over residues 205-229 (AKSEKDKVKQKAEAEEPPARSREPT) the composition is skewed to basic and acidic residues. Over residues 252-263 (RKSHSKAKKHSR) the composition is skewed to basic residues. The segment covering 274 to 283 (SPCQSPQRPR) has biased composition (low complexity). A compositionally biased stretch (basic residues) spans 284 to 293 (QSPRRPRHVA). Over residues 406 to 416 (SSSHDGKHDEG) the composition is skewed to basic and acidic residues. Low complexity-rich tracts occupy residues 508 to 519 (SSRSDRSACTSS) and 572 to 586 (GGTP…RFGS). The segment covering 662–675 (TNPTSRESSYRDLS) has biased composition (polar residues). Positions 759 to 779 (GMSATPARTRASAAASARSRP) are enriched in low complexity. The segment covering 784–796 (YATSPPGDSSGWQ) has biased composition (polar residues). A compositionally biased stretch (low complexity) spans 923 to 943 (GSSAASGTGTTSGSSQTGANA). Residues 1004 to 1024 (SNKPNNTSTGQGEDSQDNSAA) show a composition bias toward polar residues. Positions 1045–1059 (ASGSSASSAITDSSS) are enriched in low complexity.

Belongs to the MDM34 family. As to quaternary structure, component of the ER-mitochondria encounter structure (ERMES) or MDM complex, composed of MMM1, MDM10, MDM12 and MDM34.

The protein localises to the mitochondrion outer membrane. Component of the ERMES/MDM complex, which serves as a molecular tether to connect the endoplasmic reticulum (ER) and mitochondria. Components of this complex are involved in the control of mitochondrial shape and protein biogenesis, and function in nonvesicular lipid trafficking between the ER and mitochondria. MDM34 is required for the interaction of the ER-resident membrane protein MMM1 and the outer mitochondrial membrane-resident beta-barrel protein MDM10. This is Mitochondrial distribution and morphology protein 34 from Mycosarcoma maydis (Corn smut fungus).